The following is a 218-amino-acid chain: Autophagy-related protein 101 (218 aa).

The segment at 152–156 (IINIV) is important for interaction with ATG13.

This sequence belongs to the ATG101 family. As to quaternary structure, interacts with ATG13. Associates with a complex composed of ATG13, ULK1 and RB1CC1; the association with this complex requires the presence of ATG13.

Its subcellular location is the cytoplasm. It is found in the preautophagosomal structure. Its function is as follows. Autophagy factor required for autophagosome formation. Stabilizes ATG13, protecting it from proteasomal degradation. The sequence is that of Autophagy-related protein 101 (ATG101) from Homo sapiens (Human).